The chain runs to 81 residues: MLRQIIGQAKKHPSLIPLFVFIGTGATGATLYLLRLALFNPDVCWDRNNPEPWNKLGPNDQYKFYSVNVDYSKLKKERPDF.

Residues 1 to 14 (MLRQIIGQAKKHPS) lie on the Mitochondrial matrix side of the membrane. The residue at position 10 (lysine 10) is an N6-acetyllysine. The helical transmembrane segment at 15–37 (LIPLFVFIGTGATGATLYLLRLA) threads the bilayer. Residues 38–81 (LFNPDVCWDRNNPEPWNKLGPNDQYKFYSVNVDYSKLKKERPDF) are Mitochondrial intermembrane-facing. At serine 66 the chain carries Phosphoserine.

This sequence belongs to the complex IV NDUFA4 subunit family. As to quaternary structure, component of the cytochrome c oxidase (complex IV, CIV), a multisubunit enzyme composed of 14 subunits. The complex is composed of a catalytic core of 3 subunits MT-CO1, MT-CO2 and MT-CO3, encoded in the mitochondrial DNA, and 11 supernumerary subunits COX4I1 (or COX4I2), COX5A, COX5B, COX6A1 (or COX6A2), COX6B1 (or COX6B2), COX6C, COX7A2 (or COX7A1), COX7B, COX7C, COX8A and NDUFA4, which are encoded in the nuclear genome. The complex exists as a monomer or a dimer and forms supercomplexes (SCs) in the inner mitochondrial membrane with NADH-ubiquinone oxidoreductase (complex I, CI) and ubiquinol-cytochrome c oxidoreductase (cytochrome b-c1 complex, complex III, CIII), resulting in different assemblies (supercomplex SCI(1)III(2)IV(1) and megacomplex MCI(2)III(2)IV(2)). Interacts with RAB5IF. Interacts with FLVCR2; this interaction occurs in the absence of heme and is disrupted upon heme binding.

It is found in the mitochondrion inner membrane. In terms of biological role, component of the cytochrome c oxidase, the last enzyme in the mitochondrial electron transport chain which drives oxidative phosphorylation. The respiratory chain contains 3 multisubunit complexes succinate dehydrogenase (complex II, CII), ubiquinol-cytochrome c oxidoreductase (cytochrome b-c1 complex, complex III, CIII) and cytochrome c oxidase (complex IV, CIV), that cooperate to transfer electrons derived from NADH and succinate to molecular oxygen, creating an electrochemical gradient over the inner membrane that drives transmembrane transport and the ATP synthase. Cytochrome c oxidase is the component of the respiratory chain that catalyzes the reduction of oxygen to water. Electrons originating from reduced cytochrome c in the intermembrane space (IMS) are transferred via the dinuclear copper A center (CU(A)) of subunit 2 and heme A of subunit 1 to the active site in subunit 1, a binuclear center (BNC) formed by heme A3 and copper B (CU(B)). The BNC reduces molecular oxygen to 2 water molecules unsing 4 electrons from cytochrome c in the IMS and 4 protons from the mitochondrial matrix. NDUFA4 is required for complex IV maintenance. The sequence is that of Cytochrome c oxidase subunit NDUFA4 (NDUFA4) from Homo sapiens (Human).